Here is a 387-residue protein sequence, read N- to C-terminus: GTPase Obg (387 aa).

Residues 1-159 enclose the Obg domain; that stretch reads MKFLDEAKIY…MWVRLEMKLL (159 aa). An OBG-type G domain is found at 160 to 334; that stretch reads ADVGLVGMPN…LVYHVGGMVK (175 aa). GTP contacts are provided by residues 166–173, 191–195, 213–216, 283–286, and 315–317; these read GMPNAGKS, FTTLQ, DIPG, SKAD, and SSA. The Mg(2+) site is built by S173 and T193. The disordered stretch occupies residues 347 to 379; it reads LEDAPTRAGSKALRDEHAPSWQDDDDDDDDDDG. The segment covering 368-379 has biased composition (acidic residues); it reads QDDDDDDDDDDG.

Belongs to the TRAFAC class OBG-HflX-like GTPase superfamily. OBG GTPase family. As to quaternary structure, monomer. Mg(2+) serves as cofactor.

Its subcellular location is the cytoplasm. Its function is as follows. An essential GTPase which binds GTP, GDP and possibly (p)ppGpp with moderate affinity, with high nucleotide exchange rates and a fairly low GTP hydrolysis rate. Plays a role in control of the cell cycle, stress response, ribosome biogenesis and in those bacteria that undergo differentiation, in morphogenesis control. The chain is GTPase Obg from Magnetococcus marinus (strain ATCC BAA-1437 / JCM 17883 / MC-1).